Consider the following 276-residue polypeptide: Energy-coupling factor transporter ATP-binding protein EcfA1 (276 aa).

Positions 2 to 237 (IEIKNLKFKY…GSELVDLGLD (236 aa)) constitute an ABC transporter domain. Residue 37 to 44 (GHNGSGKS) participates in ATP binding.

It belongs to the ABC transporter superfamily. Energy-coupling factor EcfA family. As to quaternary structure, forms a stable energy-coupling factor (ECF) transporter complex composed of 2 membrane-embedded substrate-binding proteins (S component), 2 ATP-binding proteins (A component) and 2 transmembrane proteins (T component).

Its subcellular location is the cell membrane. ATP-binding (A) component of a common energy-coupling factor (ECF) ABC-transporter complex. Unlike classic ABC transporters this ECF transporter provides the energy necessary to transport a number of different substrates. This chain is Energy-coupling factor transporter ATP-binding protein EcfA1, found in Streptococcus thermophilus (strain ATCC BAA-491 / LMD-9).